Consider the following 624-residue polypeptide: Mannosyl-oligosaccharide 1,2-alpha-mannosidase MNS3 (624 aa).

At 1 to 43 (MSKSLPYSVKDIHYDNAKFRHRSPLKVFSQSLLTLSTKRNYAS) the chain is on the cytoplasmic side. A helical; Signal-anchor for type II membrane protein membrane pass occupies residues 44–64 (CSTGKFLILILFFGVACLMLM). The Lumenal portion of the chain corresponds to 65 to 624 (SKSPNESGLN…AHPLPIRRNT (560 aa)). N-linked (GlcNAc...) asparagine glycosylation is found at Asn69 and Asn114. Positions 91–123 (LRKPPRLPPRLSPDEGQLRGSSTNGSTISNSDP) are disordered. Positions 110 to 121 (GSSTNGSTISNS) are enriched in low complexity. The active-site Proton donor is the Glu212. N-linked (GlcNAc...) asparagine glycosylation occurs at Asn236. The active site involves Asp357. Residue Asn377 is glycosylated (N-linked (GlcNAc...) asparagine). Cys428 and Cys471 form a disulfide bridge. Glu485 (proton donor) is an active-site residue. The N-linked (GlcNAc...) asparagine glycan is linked to Asn503. Glu526 is a catalytic residue. Thr613 serves as a coordination point for Ca(2+).

This sequence belongs to the glycosyl hydrolase 47 family. Ca(2+) serves as cofactor. Mn(2+) is required as a cofactor. The cofactor is Mg(2+). As to expression, expressed in flowers, siliques, stems, leaves, roots, stamens and sepals.

Its subcellular location is the golgi apparatus. It is found in the cis-Golgi network membrane. The enzyme catalyses N(4)-(alpha-D-Man-(1-&gt;2)-alpha-D-Man-(1-&gt;2)-alpha-D-Man-(1-&gt;3)-[alpha-D-Man-(1-&gt;2)-alpha-D-Man-(1-&gt;3)-[alpha-D-Man-(1-&gt;2)-alpha-D-Man-(1-&gt;6)]-alpha-D-Man-(1-&gt;6)]-beta-D-Man-(1-&gt;4)-beta-D-GlcNAc-(1-&gt;4)-beta-D-GlcNAc)-L-asparaginyl-[protein] (N-glucan mannose isomer 9A1,2,3B1,2,3) + 4 H2O = N(4)-(alpha-D-Man-(1-&gt;3)-[alpha-D-Man-(1-&gt;3)-[alpha-D-Man-(1-&gt;6)]-alpha-D-Man-(1-&gt;6)]-beta-D-Man-(1-&gt;4)-beta-D-GlcNAc-(1-&gt;4)-beta-D-GlcNAc)-L-asparaginyl-[protein] (N-glucan mannose isomer 5A1,2) + 4 beta-D-mannose. The catalysed reaction is N(4)-(alpha-D-Man-(1-&gt;2)-alpha-D-Man-(1-&gt;2)-alpha-D-Man-(1-&gt;3)-[alpha-D-Man-(1-&gt;3)-[alpha-D-Man-(1-&gt;2)-alpha-D-Man-(1-&gt;6)]-alpha-D-Man-(1-&gt;6)]-beta-D-Man-(1-&gt;4)-beta-D-GlcNAc-(1-&gt;4)-beta-D-GlcNAc)-L-asparaginyl-[protein] (N-glucan mannose isomer 8A1,2,3B1,3) + 3 H2O = N(4)-(alpha-D-Man-(1-&gt;3)-[alpha-D-Man-(1-&gt;3)-[alpha-D-Man-(1-&gt;6)]-alpha-D-Man-(1-&gt;6)]-beta-D-Man-(1-&gt;4)-beta-D-GlcNAc-(1-&gt;4)-beta-D-GlcNAc)-L-asparaginyl-[protein] (N-glucan mannose isomer 5A1,2) + 3 beta-D-mannose. It catalyses the reaction N(4)-(alpha-D-Man-(1-&gt;2)-alpha-D-Man-(1-&gt;2)-alpha-D-Man-(1-&gt;3)-[alpha-D-Man-(1-&gt;2)-alpha-D-Man-(1-&gt;3)-[alpha-D-Man-(1-&gt;2)-alpha-D-Man-(1-&gt;6)]-alpha-D-Man-(1-&gt;6)]-beta-D-Man-(1-&gt;4)-beta-D-GlcNAc-(1-&gt;4)-beta-D-GlcNAc)-L-asparaginyl-[protein] (N-glucan mannose isomer 9A1,2,3B1,2,3) + H2O = N(4)-(alpha-D-Man-(1-&gt;2)-alpha-D-Man-(1-&gt;2)-alpha-D-Man-(1-&gt;3)-[alpha-D-Man-(1-&gt;3)-[alpha-D-Man-(1-&gt;2)-alpha-D-Man-(1-&gt;6)]-alpha-D-Man-(1-&gt;6)]-beta-D-Man-(1-&gt;4)-beta-D-GlcNAc-(1-&gt;4)-beta-D-GlcNAc)-L-asparaginyl-[protein] (N-glucan mannose isomer 8A1,2,3B1,3) + beta-D-mannose. The protein operates within protein modification; protein glycosylation. Its activity is regulated as follows. Inhibited by kifunensine and 1-deoxymannojirimycin, but not by swainsonine. Class I alpha-mannosidase essential for early N-glycan processing. Removes preferentially alpha-1,2-linked mannose residues from Man(9)GlcNAc(2) to produce Man(8)GlcNAc(2). Involved in root development and cell wall biosynthesis. This chain is Mannosyl-oligosaccharide 1,2-alpha-mannosidase MNS3 (MNS3), found in Arabidopsis thaliana (Mouse-ear cress).